The sequence spans 119 residues: Protein Wnt-4 (119 aa).

A lipid anchor (O-palmitoleoyl serine; by PORCN) is attached at serine 1. 2 disulfide bridges follow: cysteine 69-cysteine 100 and cysteine 85-cysteine 95. Asparagine 86 is a glycosylation site (N-linked (GlcNAc...) asparagine).

The protein belongs to the Wnt family. Palmitoleoylation is required for efficient binding to frizzled receptors. Depalmitoleoylation leads to Wnt signaling pathway inhibition.

Its subcellular location is the secreted. The protein resides in the extracellular space. It is found in the extracellular matrix. Ligand for members of the frizzled family of seven transmembrane receptors. Plays an important role in embryonic development. The polypeptide is Protein Wnt-4 (WNT-4) (Eptatretus stoutii (Pacific hagfish)).